The sequence spans 348 residues: Dihydroorotase (348 aa).

Zn(2+)-binding residues include His17 and His19. Residues His19–Arg21 and Asn45 each bind substrate. Zn(2+) is bound by residues Lys103, His140, and His178. N6-carboxylysine is present on Lys103. His140 contacts substrate. Position 223 (Leu223) interacts with substrate. Asp251 serves as a coordination point for Zn(2+). Asp251 is an active-site residue. Residues His255 and Ala267 each coordinate substrate.

The protein belongs to the metallo-dependent hydrolases superfamily. DHOase family. Class II DHOase subfamily. As to quaternary structure, homodimer. Requires Zn(2+) as cofactor.

The enzyme catalyses (S)-dihydroorotate + H2O = N-carbamoyl-L-aspartate + H(+). The protein operates within pyrimidine metabolism; UMP biosynthesis via de novo pathway; (S)-dihydroorotate from bicarbonate: step 3/3. Its function is as follows. Catalyzes the reversible cyclization of carbamoyl aspartate to dihydroorotate. In Salmonella paratyphi C (strain RKS4594), this protein is Dihydroorotase.